The following is a 117-amino-acid chain: G antigen 12B/C/D/E (117 aa).

The segment at 1 to 117 is disordered; that stretch reads MSWRGRSTYY…PEEGEKQSQC (117 aa). Acidic residues-rich tracts occupy residues 32–45 and 87–96; these read FSDEVEPATPEEGE and ECEDGPDGQE. The span at 103–117 shows a compositional bias: basic and acidic residues; that stretch reads EEVKTPEEGEKQSQC.

This sequence belongs to the GAGE family.

The chain is G antigen 12B/C/D/E (GAGE12B) from Homo sapiens (Human).